The following is a 400-amino-acid chain: Peptidase M20 domain-containing protein C757.05c (400 aa).

An N-terminal signal peptide occupies residues 1–25; sequence MTMKISVWSLLIVIGYHLWMSPVLA. A glycan (N-linked (GlcNAc...) asparagine) is linked at Asn-80. A Zn(2+)-binding site is contributed by Asp-152. Catalysis depends on Glu-186, which acts as the Proton acceptor. Glu-187 is a Zn(2+) binding site.

It belongs to the peptidase M20A family. It depends on Zn(2+) as a cofactor.

It localises to the secreted. This Schizosaccharomyces pombe (strain 972 / ATCC 24843) (Fission yeast) protein is Peptidase M20 domain-containing protein C757.05c.